A 434-amino-acid polypeptide reads, in one-letter code: Methylenetetrahydrofolate--tRNA-(uracil-5-)-methyltransferase TrmFO (434 aa).

Glycine 10 to glycine 15 lines the FAD pocket.

This sequence belongs to the MnmG family. TrmFO subfamily. The cofactor is FAD.

The protein localises to the cytoplasm. It carries out the reaction uridine(54) in tRNA + (6R)-5,10-methylene-5,6,7,8-tetrahydrofolate + NADH + H(+) = 5-methyluridine(54) in tRNA + (6S)-5,6,7,8-tetrahydrofolate + NAD(+). The catalysed reaction is uridine(54) in tRNA + (6R)-5,10-methylene-5,6,7,8-tetrahydrofolate + NADPH + H(+) = 5-methyluridine(54) in tRNA + (6S)-5,6,7,8-tetrahydrofolate + NADP(+). In terms of biological role, catalyzes the folate-dependent formation of 5-methyl-uridine at position 54 (M-5-U54) in all tRNAs. The chain is Methylenetetrahydrofolate--tRNA-(uracil-5-)-methyltransferase TrmFO from Bacillus mycoides (strain KBAB4) (Bacillus weihenstephanensis).